A 278-amino-acid polypeptide reads, in one-letter code: Potassium/proton antiporter CemA (278 aa).

4 consecutive transmembrane segments (helical) span residues 61 to 81 (ILLL…FVFG), 155 to 175 (AVKN…LMIT), 203 to 223 (IILF…EVII), and 238 to 258 (FIFL…KYWI).

The protein belongs to the CemA family.

It localises to the plastid. The protein localises to the chloroplast inner membrane. The catalysed reaction is K(+)(in) + H(+)(out) = K(+)(out) + H(+)(in). Contributes to K(+)/H(+) antiport activity by supporting proton efflux to control proton extrusion and homeostasis in chloroplasts in a light-dependent manner to modulate photosynthesis. Prevents excessive induction of non-photochemical quenching (NPQ) under continuous-light conditions. Indirectly promotes efficient inorganic carbon uptake into chloroplasts. The polypeptide is Potassium/proton antiporter CemA (Pyropia yezoensis (Susabi-nori)).